The chain runs to 343 residues: Tribbles homolog 2 (343 aa).

The segment at 25–50 is disordered; sequence EELSSIRSAEPSQSFSPNLGSPSPPE. Positions 29–45 are enriched in polar residues; it reads SIRSAEPSQSFSPNLGS. The Protein kinase domain maps to 61-308; the sequence is IGKYLLLEPL…SQEILDHPWF (248 aa).

This sequence belongs to the protein kinase superfamily. CAMK Ser/Thr protein kinase family. Tribbles subfamily. Highly expressed in the thyroid, also present in ovary and cerebrum.

The protein resides in the cytoplasm. Its subcellular location is the cytoskeleton. In terms of biological role, interacts with MAPK kinases and regulates activation of MAP kinases. Does not display kinase activity. The protein is Tribbles homolog 2 of Canis lupus familiaris (Dog).